The sequence spans 259 residues: Chloroplastic import inner membrane translocase subunit HP30-2 (259 aa).

Transmembrane regions (helical) follow at residues Ala-55–Leu-75, Asn-108–Lys-124, Ala-135–Gly-155, and Met-158–Gly-178.

Belongs to the Tim17/Tim22/Tim23 family. Probable component of a protein-conducting channel made of HP30-1, HP30-2 and HP20 that mediates the import of transit sequence-less proteins into the chloroplastic inner membrane. Interacts with CEQORH.

Its subcellular location is the mitochondrion membrane. The protein localises to the plastid. It is found in the chloroplast inner membrane. In terms of biological role, together with HP30-1 and HP20, triggers the import and insertion of transit sequence-less multi-pass transmembrane proteins (e.g. CEQORH) into the chloroplastic inner membrane. The polypeptide is Chloroplastic import inner membrane translocase subunit HP30-2 (Arabidopsis thaliana (Mouse-ear cress)).